The chain runs to 393 residues: Argininosuccinate synthase (393 aa).

ATP is bound by residues 7 to 15 and Ala34; that span reads AYSGGLDTS. Positions 85 and 90 each coordinate L-citrulline. Gly115 serves as a coordination point for ATP. L-aspartate is bound by residues Thr117, Asn121, and Asp122. Residue Asn121 participates in L-citrulline binding. The L-citrulline site is built by Arg125, Ser176, Ser185, Glu261, and Tyr273.

Belongs to the argininosuccinate synthase family. Type 1 subfamily. As to quaternary structure, homotetramer.

It is found in the cytoplasm. It carries out the reaction L-citrulline + L-aspartate + ATP = 2-(N(omega)-L-arginino)succinate + AMP + diphosphate + H(+). The protein operates within amino-acid biosynthesis; L-arginine biosynthesis; L-arginine from L-ornithine and carbamoyl phosphate: step 2/3. The sequence is that of Argininosuccinate synthase from Ehrlichia canis (strain Jake).